A 143-amino-acid chain; its full sequence is Small ribosomal subunit protein uS12 (143 aa).

Proline 62 is subject to Hydroxyproline.

This sequence belongs to the universal ribosomal protein uS12 family.

The sequence is that of Small ribosomal subunit protein uS12 (rps23) from Dictyostelium discoideum (Social amoeba).